The chain runs to 119 residues: MARIAGVNLPSNKHVNIALTAIYGIGNTTARKICSDLQIPPFIKLKDLEDIKLDELRESVSKLIVEGDLRREISMNIKRLIDLGSYRGLRHRRGLPVRGQRTKTNARTRKGPRKAIGAK.

The segment covering 94-113 (GLPVRGQRTKTNARTRKGPR) has biased composition (basic residues). Residues 94–119 (GLPVRGQRTKTNARTRKGPRKAIGAK) form a disordered region.

This sequence belongs to the universal ribosomal protein uS13 family. In terms of assembly, part of the 30S ribosomal subunit. Forms a loose heterodimer with protein S19. Forms two bridges to the 50S subunit in the 70S ribosome.

Its function is as follows. Located at the top of the head of the 30S subunit, it contacts several helices of the 16S rRNA. In the 70S ribosome it contacts the 23S rRNA (bridge B1a) and protein L5 of the 50S subunit (bridge B1b), connecting the 2 subunits; these bridges are implicated in subunit movement. Contacts the tRNAs in the A and P-sites. The chain is Small ribosomal subunit protein uS13 from Nitrosomonas europaea (strain ATCC 19718 / CIP 103999 / KCTC 2705 / NBRC 14298).